The chain runs to 1028 residues: Beta-galactosidase (1028 aa).

Residues N104 and D203 each coordinate substrate. D203 serves as a coordination point for Na(+). E418, H420, and E463 together coordinate Mg(2+). Residues E463 and 539–542 contribute to the substrate site; that span reads EYAH. E463 (proton donor) is an active-site residue. Catalysis depends on E539, which acts as the Nucleophile. N599 serves as a coordination point for Mg(2+). Residues F603 and N606 each contribute to the Na(+) site. Residues N606 and W1004 each contribute to the substrate site.

It belongs to the glycosyl hydrolase 2 family. As to quaternary structure, homodimer. Requires Mg(2+) as cofactor. Mn(2+) serves as cofactor. Fe cation is required as a cofactor. It depends on Na(+) as a cofactor. The cofactor is K(+).

The catalysed reaction is Hydrolysis of terminal non-reducing beta-D-galactose residues in beta-D-galactosides.. With respect to regulation, completely inhibited by Hg(2+), Cu(2+) Ag(2+), and partially inhibited by Zn(2+), imidazole and EDTA. Activated by Ca(2+), Co(2+), Ni(2+). Functionally, this beta-galactosidase is also able to catalyze glycosyl transfer to a series of acceptors, including hexose, pentose, beta- or alpha-disaccharides, hexahydroxy alcohol, cyclitol, and aromatic glycosides, resulting in the production of galacto-oligosaccharides (GOS). The protein is Beta-galactosidase (lacZ) of Enterobacter agglomerans (Erwinia herbicola).